The chain runs to 477 residues: Enolase 1, chloroplastic (477 aa).

The N-terminal 41 residues, 1–41 (MALTTKPHHLQRSFLSPSRVSGERYLESAPSCLRFRRSGVQ), are a transit peptide targeting the chloroplast. Residues histidine 203 and glutamate 212 each contribute to the substrate site. Residue glutamate 255 is the Proton donor of the active site. 3 residues coordinate Mg(2+): aspartate 290, glutamate 340, and aspartate 365. Positions 340 and 365 each coordinate substrate. Lysine 390 functions as the Proton acceptor in the catalytic mechanism. Residues 417–420 (SHRS) and lysine 441 each bind substrate. Serine 476 is modified (phosphoserine).

This sequence belongs to the enolase family. It depends on Mg(2+) as a cofactor. In terms of tissue distribution, highly expressed in young roots, young siliques, and shoot apex. Lowly expressed in young leaves, stems and cotyledons.

The protein localises to the plastid. It is found in the chloroplast. It carries out the reaction (2R)-2-phosphoglycerate = phosphoenolpyruvate + H2O. It participates in carbohydrate degradation; glycolysis; pyruvate from D-glyceraldehyde 3-phosphate: step 4/5. The protein is Enolase 1, chloroplastic (ENO1) of Arabidopsis thaliana (Mouse-ear cress).